The following is a 428-amino-acid chain: Transcription factor Sp7 (428 aa).

The interval 30–84 is disordered; that stretch reads SSPLRDSTTLGKGGTKKPYADLSAPKTMGDAYPAPFSSTNGLLSPAGSPPAPASG. N6-propionyllysine occurs at positions 41 and 45. Lysine 55 is covalently cross-linked (Glycyl lysine isopeptide (Lys-Gly) (interchain with G-Cter in ubiquitin)). Residues 153–161 carry the 9aaTAD motif; it reads TPWWDMHPG. A Glycyl lysine isopeptide (Lys-Gly) (interchain with G-Cter in ubiquitin) cross-link involves residue lysine 227. The disordered stretch occupies residues 229-257; sequence KAVGNSGQLEGSGAAKPPRGAGTGGSGGY. 3 consecutive C2H2-type zinc fingers follow at residues 291–315, 321–345, and 351–373; these read HSCHIPGCGKVYGKASHLKAHLRWH, FVCNWLFCGKRFTRSDELERHVRTH, and FTCLLCSKRFTRSDHLSKHQRTH. Residues lysine 358 and lysine 368 each carry the N6-propionyllysine modification. Positions 364–428 are disordered; it reads DHLSKHQRTH…SPEQSNLLEI (65 aa).

It belongs to the Sp1 C2H2-type zinc-finger protein family. In terms of assembly, interacts with RIOX1; the interaction is direct and inhibits transcription activator activity. In terms of processing, propionylated. Depropionylation at Lys-368 by SIRT7 activates transcription factor activity and positively regulates bone formation by osteoblasts. Ubiquitination at leads to proteasomal degradation. SP7 is a short-live protein with an endogenous half-life of approximately 12 hours. Osteoblast/chondrocyte specific.

It is found in the nucleus. In terms of biological role, transcriptional activator essential for osteoblast differentiation. Binds to SP1 and EKLF consensus sequences and to other G/C-rich sequences. This Mus musculus (Mouse) protein is Transcription factor Sp7 (Sp7).